The following is a 294-amino-acid chain: 3-methyl-2-oxobutanoate hydroxymethyltransferase 1 (294 aa).

Residue aspartate 55 coordinates Mg(2+). 3-methyl-2-oxobutanoate contacts are provided by residues 55-56 and lysine 123; that span reads DS. The active-site Proton acceptor is glutamate 192.

This sequence belongs to the PanB family. In terms of assembly, homodecamer; pentamer of dimers. Mg(2+) serves as cofactor.

It is found in the cytoplasm. The enzyme catalyses 3-methyl-2-oxobutanoate + (6R)-5,10-methylene-5,6,7,8-tetrahydrofolate + H2O = 2-dehydropantoate + (6S)-5,6,7,8-tetrahydrofolate. It participates in cofactor biosynthesis; (R)-pantothenate biosynthesis; (R)-pantoate from 3-methyl-2-oxobutanoate: step 1/2. In terms of biological role, catalyzes the reversible reaction in which hydroxymethyl group from 5,10-methylenetetrahydrofolate is transferred onto alpha-ketoisovalerate to form ketopantoate. The polypeptide is 3-methyl-2-oxobutanoate hydroxymethyltransferase 1 (Methylibium petroleiphilum (strain ATCC BAA-1232 / LMG 22953 / PM1)).